The chain runs to 264 residues: Glutamate racemase 2 (264 aa).

Residues 10 to 11 (DS) and 42 to 43 (YG) contribute to the substrate site. The Proton donor/acceptor role is filled by cysteine 73. Position 74-75 (74-75 (NT)) interacts with substrate. Cysteine 181 (proton donor/acceptor) is an active-site residue. Residue 182-183 (TH) coordinates substrate.

The protein belongs to the aspartate/glutamate racemases family.

It carries out the reaction L-glutamate = D-glutamate. The protein operates within cell wall biogenesis; peptidoglycan biosynthesis. In terms of biological role, provides the (R)-glutamate required for cell wall biosynthesis. The chain is Glutamate racemase 2 from Caldanaerobacter subterraneus subsp. tengcongensis (strain DSM 15242 / JCM 11007 / NBRC 100824 / MB4) (Thermoanaerobacter tengcongensis).